A 549-amino-acid chain; its full sequence is MARQKMFYNKLLGMLSVGFGFAWALENITIYEFDFGKGILDQSYGGVFSNNGPSQVQLRDAVLMNGTVVYDSNGAWDSSALEEWLQGQKKVSIEKIFENIGPSAVYPSISPGVVIASPSQTHPDYFYQWIRDSALTINSIVSHSAGPAIETLLQYLNVSFHLQRSNNTLGAGIGYTNDTVALGDPKWNVDNTAFTEDWGRPQNDGPALRSIAILKIIDYIKQSGTDLGAKYPFQSTADIFDDIVRWDLRFIIDHWNSSGFDLWEEVNGMHFFTLLVQLSAVDKSLSYFNASERSSPFVEELRQTRRDISKFLVDPANGFINGKYNYIVGTPMIADTLRSGLDISTLLAANTVHDAPSASHLPFDINDPAVLNTLHHLMLHMRSIYPINDSSKNATGIALGRYPEDVYDGYGFGEGNPWVLATCTASTTLYQLIYRHISEQHDLVVPMNNDCSNAFWSELVFSNLTTLGNDEGYLILEFNTPAFNQTIQKIFQLADSFLVKLKAHVGTDGELSEQFNKYTGFMQGAQHLTWSYTSFWDAYQIRQEVLQSL.

A substrate-binding site is contributed by tryptophan 198. Aspartate 261 functions as the Proton acceptor in the catalytic mechanism. The Proton donor role is filled by glutamate 264.

The protein belongs to the glycosyl hydrolase 15 family.

The catalysed reaction is Hydrolysis of terminal (1-&gt;4)-linked alpha-D-glucose residues successively from non-reducing ends of the chains with release of beta-D-glucose.. This is Glucoamylase, intracellular sporulation-specific (SGA1) from Saccharomyces cerevisiae (strain ATCC 204508 / S288c) (Baker's yeast).